Reading from the N-terminus, the 470-residue chain is tRNA modification GTPase MnmE (470 aa).

3 residues coordinate (6S)-5-formyl-5,6,7,8-tetrahydrofolate: R24, E81, and K122. Residues 218 to 383 form the TrmE-type G domain; the sequence is GIKIVIAGKP…LQEYLSNNIK (166 aa). N228 is a K(+) binding site. Residues 228–233, 247–253, and 272–275 each bind GTP; these read NAGKSS, STISGTT, and DTAG. A Mg(2+)-binding site is contributed by S232. Positions 247, 249, and 252 each coordinate K(+). T253 serves as a coordination point for Mg(2+). Position 470 (K470) interacts with (6S)-5-formyl-5,6,7,8-tetrahydrofolate.

This sequence belongs to the TRAFAC class TrmE-Era-EngA-EngB-Septin-like GTPase superfamily. TrmE GTPase family. In terms of assembly, homodimer. Heterotetramer of two MnmE and two MnmG subunits. K(+) serves as cofactor.

The protein resides in the cytoplasm. Its function is as follows. Exhibits a very high intrinsic GTPase hydrolysis rate. Involved in the addition of a carboxymethylaminomethyl (cmnm) group at the wobble position (U34) of certain tRNAs, forming tRNA-cmnm(5)s(2)U34. The sequence is that of tRNA modification GTPase MnmE from Blochmanniella pennsylvanica (strain BPEN).